Here is a 368-residue protein sequence, read N- to C-terminus: Germination protease (368 aa).

Positions 1-15 are excised as a propeptide; it reads MKEPLDLSKYSVRTD.

Belongs to the peptidase A25 family. Homotetramer. In terms of processing, autoproteolytically processed. The inactive tetrameric zymogen termed p46 autoprocesses to a smaller form termed p41, which is active only during spore germination.

It catalyses the reaction Endopeptidase action with P4 Glu or Asp, P1 preferably Glu &gt; Asp, P1' hydrophobic and P2' Ala.. Its function is as follows. Initiates the rapid degradation of small, acid-soluble proteins during spore germination. The protein is Germination protease of Bacillus anthracis (strain A0248).